A 117-amino-acid chain; its full sequence is NADH-ubiquinone oxidoreductase chain 3 (117 aa).

3 helical membrane-spanning segments follow: residues 1–21 (MKFI…LLLL), 58–78 (FLMT…LPII), and 86–106 (TMIS…TLIL).

The protein belongs to the complex I subunit 3 family.

Its subcellular location is the mitochondrion membrane. The catalysed reaction is a ubiquinone + NADH + 5 H(+)(in) = a ubiquinol + NAD(+) + 4 H(+)(out). Core subunit of the mitochondrial membrane respiratory chain NADH dehydrogenase (Complex I) that is believed to belong to the minimal assembly required for catalysis. Complex I functions in the transfer of electrons from NADH to the respiratory chain. The immediate electron acceptor for the enzyme is believed to be ubiquinone. This Apis mellifera ligustica (Common honeybee) protein is NADH-ubiquinone oxidoreductase chain 3 (ND3).